Consider the following 411-residue polypeptide: Tubulin beta-2 chain (411 aa).

The GTP site is built by Glu-37, Ser-106, Gly-110, Thr-111, Gly-112, Asn-172, and Asn-194. Glu-37 contributes to the Mg(2+) binding site. Residues 392–411 form a disordered region; sequence QYQDATAEPEGXYEEDYDEA. Over residues 402 to 411 the composition is skewed to acidic residues; it reads GXYEEDYDEA.

It belongs to the tubulin family. In terms of assembly, dimer of alpha and beta chains. A typical microtubule is a hollow water-filled tube with an outer diameter of 25 nm and an inner diameter of 15 nM. Alpha-beta heterodimers associate head-to-tail to form protofilaments running lengthwise along the microtubule wall with the beta-tubulin subunit facing the microtubule plus end conferring a structural polarity. Microtubules usually have 13 protofilaments but different protofilament numbers can be found in some organisms and specialized cells. Mg(2+) is required as a cofactor.

The protein localises to the cytoplasm. Its subcellular location is the cytoskeleton. Tubulin is the major constituent of microtubules, a cylinder consisting of laterally associated linear protofilaments composed of alpha- and beta-tubulin heterodimers. Microtubules grow by the addition of GTP-tubulin dimers to the microtubule end, where a stabilizing cap forms. Below the cap, tubulin dimers are in GDP-bound state, owing to GTPase activity of alpha-tubulin. The polypeptide is Tubulin beta-2 chain (TUBB2) (Anemia phyllitidis (Fern)).